Consider the following 276-residue polypeptide: Large ribosomal subunit protein uL2 (276 aa).

2 disordered regions span residues 1 to 20 (MGIK…TTND) and 219 to 276 (TVRG…RRKK). Over residues 7-20 (NPTTNGRRNMTTND) the composition is skewed to polar residues.

This sequence belongs to the universal ribosomal protein uL2 family. As to quaternary structure, part of the 50S ribosomal subunit. Forms a bridge to the 30S subunit in the 70S ribosome.

Its function is as follows. One of the primary rRNA binding proteins. Required for association of the 30S and 50S subunits to form the 70S ribosome, for tRNA binding and peptide bond formation. It has been suggested to have peptidyltransferase activity; this is somewhat controversial. Makes several contacts with the 16S rRNA in the 70S ribosome. The chain is Large ribosomal subunit protein uL2 from Bacillus anthracis (strain A0248).